Reading from the N-terminus, the 318-residue chain is Taste receptor type 2 member 60 (318 aa).

Residues 1 to 7 (MNGDHMV) are Extracellular-facing. A helical membrane pass occupies residues 8–28 (LGSSVTDKKAIILVTILLLLR). The Cytoplasmic segment spans residues 29-40 (LVAIAGNGFIIA). The chain crosses the membrane as a helical span at residues 41-61 (ALGVEWVLRRMLLPCDXLLVS). Topologically, residues 62 to 88 (LGASRFCLQSVVMGKTIYVFLHPMAFP) are extracellular. Residues 89-109 (YNPVLQFLAFQWDFLNAATLW) traverse the membrane as a helical segment. The Cytoplasmic segment spans residues 110 to 128 (FSTWLSVFYCVKIAAFTHP). Residues 129-149 (VFLWLKHKLSGWLPWILFSSV) form a helical membrane-spanning segment. The Extracellular segment spans residues 150-183 (GLSSFTTILFFIGNHRMYQNYLRNHLQPWNITGN). An N-linked (GlcNAc...) asparagine glycan is attached at N179. The chain crosses the membrane as a helical span at residues 184–204 (SIRSYCEKFYLFPLKMITWTM). The Cytoplasmic segment spans residues 205–234 (PTAVFFICMILLITSLGRHMKKALLTTSGF). Residues 235–255 (REPSMQAHIKALLALLSFAML) form a helical membrane-spanning segment. At 256 to 264 (FISYFLSLV) the chain is on the extracellular side. A helical membrane pass occupies residues 265-285 (FSAAGIFPPLDFKFWVWESVI). At 286–318 (YLCAAVHPIILLFSNCRLRAVLKSCRSSRCGTP) the chain is on the cytoplasmic side.

The protein belongs to the G-protein coupled receptor T2R family.

The protein localises to the membrane. Receptor that may play a role in the perception of bitterness and is gustducin-linked. May play a role in sensing the chemical composition of the gastrointestinal content. The activity of this receptor may stimulate alpha gustducin, mediate PLC-beta-2 activation and lead to the gating of TRPM5. The sequence is that of Taste receptor type 2 member 60 (TAS2R60) from Gorilla gorilla gorilla (Western lowland gorilla).